Consider the following 76-residue polypeptide: DNA-directed RNA polymerase subunit omega (76 aa).

Belongs to the RNA polymerase subunit omega family. In terms of assembly, in cyanobacteria the RNAP catalytic core is composed of 2 alpha, 1 beta, 1 beta', 1 gamma and 1 omega subunit. When a sigma factor is associated with the core the holoenzyme is formed, which can initiate transcription.

The catalysed reaction is RNA(n) + a ribonucleoside 5'-triphosphate = RNA(n+1) + diphosphate. Functionally, promotes RNA polymerase assembly. Latches the N- and C-terminal regions of the beta' subunit thereby facilitating its interaction with the beta and alpha subunits. The sequence is that of DNA-directed RNA polymerase subunit omega from Acaryochloris marina (strain MBIC 11017).